A 480-amino-acid chain; its full sequence is Endothelial transcription factor GATA-2 (480 aa).

At serine 73 the chain carries Phosphoserine. Arginine 86 carries the asymmetric dimethylarginine modification. Residues 119–209 (SPFSKTPLHP…GSAARGEDKD (91 aa)) form a disordered region. Over residues 143–153 (GAGGGSGGGSG) the composition is skewed to gly residues. The span at 185–203 (PSTTGAASPASSSAGGSAA) shows a compositional bias: low complexity. Serine 192 carries the post-translational modification Phosphoserine. GATA-type zinc fingers lie at residues 295–319 (CVNC…CNAC) and 349–373 (CANC…CNAC). Lysine 389 participates in a covalent cross-link: Glycyl lysine isopeptide (Lys-Gly) (interchain with G-Cter in SUMO2). Positions 448–480 (HSGHILPTPTPIHPSSSLSFGHPHPSSMVTAMG) are disordered.

In terms of assembly, interacts with BRD3. Interacts with AR and CCAR1. Interacts with MDFIC. In terms of tissue distribution, endothelial cells.

The protein resides in the nucleus. Transcriptional activator which regulates endothelin-1 gene expression in endothelial cells. Binds to the consensus sequence 5'-AGATAG-3'. This chain is Endothelial transcription factor GATA-2 (GATA2), found in Homo sapiens (Human).